A 185-amino-acid chain; its full sequence is Elongation factor P (185 aa).

It belongs to the elongation factor P family.

The protein resides in the cytoplasm. The protein operates within protein biosynthesis; polypeptide chain elongation. Functionally, involved in peptide bond synthesis. Stimulates efficient translation and peptide-bond synthesis on native or reconstituted 70S ribosomes in vitro. Probably functions indirectly by altering the affinity of the ribosome for aminoacyl-tRNA, thus increasing their reactivity as acceptors for peptidyl transferase. This chain is Elongation factor P, found in Geobacillus thermodenitrificans (strain NG80-2).